A 488-amino-acid chain; its full sequence is Secreted triacylglycerol lipase LIP1 (488 aa).

An N-terminal signal peptide occupies residues 1 to 26; that stretch reads MPSMLSLFYLAQSLFLLLLFPLYGHA. Residues C119 and C288 are joined by a disulfide bond. An N-linked (GlcNAc...) asparagine glycan is attached at N183. The active-site Nucleophile is the S201. N-linked (GlcNAc...) asparagine glycosylation occurs at N316. Active-site residues include D348 and H382. The disordered stretch occupies residues 461-488; the sequence is SKSGSSLKSHSHSQTHKHRKDVSTISNA. Residues 469 to 480 are compositionally biased toward basic residues; sequence SHSHSQTHKHRK.

The protein belongs to the AB hydrolase superfamily. Lipase family. Class Lip subfamily.

It localises to the secreted. It carries out the reaction a triacylglycerol + H2O = a diacylglycerol + a fatty acid + H(+). The enzyme catalyses a monoacylglycerol + H2O = glycerol + a fatty acid + H(+). It catalyses the reaction a diacylglycerol + H2O = a monoacylglycerol + a fatty acid + H(+). Its activity is regulated as follows. Inhibited by different metal ions including Fe(2+), Fe(3+), Cu(2+), and Zn(2+). The monovalent ions Na(+) and K(+) exhibit less dramatic inhibition. Functionally, secreted lipase that releases free fatty acids from monoacylglycerol and triacylglycerol but has no phospholipase or lysophospholipase activities. Has minor esterase activity. Due to an absence of fatty acid synthase genes in Malassezia species, secretory lipases are essential for the yeast to generate free fatty acids from degradation of sebum and assimilate them as lipid sources for growth. Plays important roles not only in lipid metabolism but also in the immune response of host cells and pathogenesis. Hydrolyzes lipids, such as Tween 20, 40 and 80, with Tween 80 being the best substrate. This chain is Secreted triacylglycerol lipase LIP1, found in Malassezia furfur (Pityriasis versicolor infection agent).